The sequence spans 301 residues: uncharacterized protein (301 aa).

Residues Ser44 and Tyr107 each act as charge relay system in the active site. The active-site Proton donor is Tyr133. The active-site Schiff-base intermediate with substrate is Lys162.

This sequence belongs to the DapA family. Homotetramer.

The protein localises to the cytoplasm. This is an uncharacterized protein from Pyrobaculum islandicum (strain DSM 4184 / JCM 9189 / GEO3).